A 512-amino-acid chain; its full sequence is Cytochrome P450 98A1 (512 aa).

The helical transmembrane segment at 3–23 threads the bilayer; the sequence is ASLLLSVALAVVLIPLSLALL. Residue cysteine 441 participates in heme binding.

Belongs to the cytochrome P450 family. It depends on heme as a cofactor.

It localises to the membrane. In Sorghum bicolor (Sorghum), this protein is Cytochrome P450 98A1 (CYP98A1).